The sequence spans 189 residues: Isopentenyl-diphosphate Delta-isomerase (189 aa).

Mn(2+) is bound by residues His-27 and His-34. The region spanning 32-171 is the Nudix hydrolase domain; that stretch reads PLHFAFSTYI…PFVFSPWMVD (140 aa). Residue Cys-69 is part of the active site. Mn(2+) is bound at residue His-71. Glu-89 lines the Mg(2+) pocket. 2 residues coordinate Mn(2+): Glu-119 and Glu-121. The active site involves Glu-121.

Belongs to the IPP isomerase type 1 family. Requires Mg(2+) as cofactor. Mn(2+) is required as a cofactor.

The protein resides in the cytoplasm. The catalysed reaction is isopentenyl diphosphate = dimethylallyl diphosphate. The protein operates within isoprenoid biosynthesis; dimethylallyl diphosphate biosynthesis; dimethylallyl diphosphate from isopentenyl diphosphate: step 1/1. In terms of biological role, catalyzes the 1,3-allylic rearrangement of the homoallylic substrate isopentenyl (IPP) to its highly electrophilic allylic isomer, dimethylallyl diphosphate (DMAPP). This Corynebacterium glutamicum (strain R) protein is Isopentenyl-diphosphate Delta-isomerase.